The chain runs to 557 residues: Arginine--tRNA ligase (557 aa).

Residues 132-142 (ANPTGLLHMGN) carry the 'HIGH' region motif.

It belongs to the class-I aminoacyl-tRNA synthetase family. As to quaternary structure, monomer.

It is found in the cytoplasm. The catalysed reaction is tRNA(Arg) + L-arginine + ATP = L-arginyl-tRNA(Arg) + AMP + diphosphate. The sequence is that of Arginine--tRNA ligase from Carboxydothermus hydrogenoformans (strain ATCC BAA-161 / DSM 6008 / Z-2901).